Reading from the N-terminus, the 284-residue chain is BES1/BZR1 homolog protein 3 (284 aa).

2 disordered regions span residues 1–21 (MTSG…RRER) and 85–116 (GSTS…PSPT). Residues 6–88 (RTPTWKEREN…RMDLMNGSTS (83 aa)) are required for DNA-binding. The span at 85–97 (GSTSASPCSSYQH) shows a compositional bias: polar residues. The segment covering 98–114 (SPRASYNPSPSSSSFPS) has biased composition (low complexity). Residue T153 is modified to Phosphothreonine.

The protein belongs to the BZR/LAT61 family. In terms of processing, phosphorylated. Phosphorylation increases protein degradation.

The polypeptide is BES1/BZR1 homolog protein 3 (BEH3) (Arabidopsis thaliana (Mouse-ear cress)).